A 199-amino-acid chain; its full sequence is Potassium-transporting ATPase KdpC subunit (199 aa).

A helical transmembrane segment spans residues 7–27 (PAIVLLLALTLLTGLAYPLAM). The tract at residues 67–86 (HGRPSATTAADPQDSSKTVP) is disordered. A compositionally biased stretch (polar residues) spans 71-84 (SATTAADPQDSSKT).

The protein belongs to the KdpC family. As to quaternary structure, the system is composed of three essential subunits: KdpA, KdpB and KdpC.

The protein localises to the cell inner membrane. Part of the high-affinity ATP-driven potassium transport (or Kdp) system, which catalyzes the hydrolysis of ATP coupled with the electrogenic transport of potassium into the cytoplasm. This subunit acts as a catalytic chaperone that increases the ATP-binding affinity of the ATP-hydrolyzing subunit KdpB by the formation of a transient KdpB/KdpC/ATP ternary complex. This Rhodopseudomonas palustris (strain BisB18) protein is Potassium-transporting ATPase KdpC subunit.